The primary structure comprises 622 residues: Glucose 1,6-bisphosphate synthase (622 aa).

Alpha-D-glucose 1,6-bisphosphate contacts are provided by Arg-73 and Ser-175. Ser-175 functions as the Phosphoserine intermediate in the catalytic mechanism. Mg(2+) is bound by residues Ser-175, Asp-332, and Asp-334. Residue Ser-175 is modified to Phosphoserine. Alpha-D-glucose 1,6-bisphosphate is bound by residues Asp-336, Arg-337, Glu-434, Ser-436, and Lys-448.

The protein belongs to the phosphohexose mutase family.

The protein resides in the cytoplasm. The protein localises to the cytosol. The catalysed reaction is (2R)-3-phospho-glyceroyl phosphate + alpha-D-glucose 1-phosphate = alpha-D-glucose 1,6-bisphosphate + (2R)-3-phosphoglycerate + H(+). It carries out the reaction alpha-D-glucose 6-phosphate + (2R)-3-phospho-glyceroyl phosphate = alpha-D-glucose 1,6-bisphosphate + (2R)-3-phosphoglycerate + H(+). The enzyme catalyses (2R)-3-phospho-glyceroyl phosphate + alpha-D-ribose 1-phosphate = alpha-D-ribose 1,5-bisphosphate + (2R)-3-phosphoglycerate + H(+). It catalyses the reaction 2-deoxy-alpha-D-ribose 1-phosphate + (2R)-3-phospho-glyceroyl phosphate = 2-deoxy-alpha-D-ribose 1,5-bisphosphate + (2R)-3-phosphoglycerate + H(+). The catalysed reaction is (2R)-3-phospho-glyceroyl phosphate + alpha-D-mannose 1-phosphate = alpha-D-mannose 1,6-bisphosphate + (2R)-3-phosphoglycerate + H(+). Its function is as follows. Glucose 1,6-bisphosphate synthase using 1,3-bisphosphoglycerate as a phosphate donor and a series of 1-phosphate sugars, including glucose 1-phosphate, mannose 1-phosphate, ribose 1-phosphate and deoxyribose 1-phosphate, as acceptors. In vitro, also exhibits very low phosphopentomutase and phosphoglucomutase activity which are most probably not physiologically relevant. This chain is Glucose 1,6-bisphosphate synthase, found in Homo sapiens (Human).